The following is a 121-amino-acid chain: Large ribosomal subunit protein bL19 (121 aa).

It belongs to the bacterial ribosomal protein bL19 family.

Functionally, this protein is located at the 30S-50S ribosomal subunit interface and may play a role in the structure and function of the aminoacyl-tRNA binding site. The polypeptide is Large ribosomal subunit protein bL19 (Polaromonas sp. (strain JS666 / ATCC BAA-500)).